A 571-amino-acid polypeptide reads, in one-letter code: Proline--tRNA ligase (571 aa).

This sequence belongs to the class-II aminoacyl-tRNA synthetase family. ProS type 1 subfamily. As to quaternary structure, homodimer.

The protein localises to the cytoplasm. It carries out the reaction tRNA(Pro) + L-proline + ATP = L-prolyl-tRNA(Pro) + AMP + diphosphate. Functionally, catalyzes the attachment of proline to tRNA(Pro) in a two-step reaction: proline is first activated by ATP to form Pro-AMP and then transferred to the acceptor end of tRNA(Pro). As ProRS can inadvertently accommodate and process non-cognate amino acids such as alanine and cysteine, to avoid such errors it has two additional distinct editing activities against alanine. One activity is designated as 'pretransfer' editing and involves the tRNA(Pro)-independent hydrolysis of activated Ala-AMP. The other activity is designated 'posttransfer' editing and involves deacylation of mischarged Ala-tRNA(Pro). The misacylated Cys-tRNA(Pro) is not edited by ProRS. This is Proline--tRNA ligase from Haemophilus ducreyi (strain 35000HP / ATCC 700724).